The chain runs to 135 residues: Interleukin-5 (135 aa).

An N-terminal signal peptide occupies residues 1-19 (MRVLLQLGLLALGAVCVCA). N-linked (GlcNAc...) asparagine glycosylation is found at N48, N77, and N91.

It belongs to the IL-5 family. As to quaternary structure, homodimer; disulfide-linked. Interacts with IL5RA. Interacts with CSF2RB.

The protein resides in the secreted. Its function is as follows. Homodimeric cytokine expressed predominantly by T-lymphocytes and NK cells that plays an important role in the survival, differentiation, and chemotaxis of eosinophils. Also acts on activated and resting B-cells to induce immunoglobulin production, growth, and differentiation. Mechanistically, exerts its biological effects through a receptor composed of IL5RA subunit and the cytokine receptor common subunit beta/CSF2RB. Binding to the receptor leads to activation of various kinases including LYN, SYK and JAK2 and thereby propagates signals through the RAS-MAPK and JAK-STAT5 pathways respectively. The polypeptide is Interleukin-5 (IL5) (Cavia porcellus (Guinea pig)).